The primary structure comprises 506 residues: Cytochrome P450 6a2 (506 aa).

Position 451 (Cys-451) interacts with heme.

This sequence belongs to the cytochrome P450 family. Heme serves as cofactor.

The protein localises to the endoplasmic reticulum membrane. Its subcellular location is the microsome membrane. Is involved in the breakdown of synthetic insecticides and may be involved in the metabolism of insect hormones. The sequence is that of Cytochrome P450 6a2 (Cyp6a2) from Drosophila melanogaster (Fruit fly).